Reading from the N-terminus, the 305-residue chain is Protoheme IX farnesyltransferase (305 aa).

A run of 9 helical transmembrane segments spans residues 31–51, 52–72, 96–118, 122–144, 151–171, 180–200, 225–245, 247–267, and 281–301; these read VMSL…YSVH, PFIA…AGAI, VIES…FFMA, NLLA…TIWL, NIVI…AAVS, ILFL…ALFC, ILIY…IGMN, FIYL…AGSL, and FAYS…TNTI.

The protein belongs to the UbiA prenyltransferase family. Protoheme IX farnesyltransferase subfamily.

The protein localises to the cell inner membrane. The enzyme catalyses heme b + (2E,6E)-farnesyl diphosphate + H2O = Fe(II)-heme o + diphosphate. Its pathway is porphyrin-containing compound metabolism; heme O biosynthesis; heme O from protoheme: step 1/1. Its function is as follows. Converts heme B (protoheme IX) to heme O by substitution of the vinyl group on carbon 2 of heme B porphyrin ring with a hydroxyethyl farnesyl side group. This is Protoheme IX farnesyltransferase from Rickettsia peacockii (strain Rustic).